A 452-amino-acid chain; its full sequence is RNA polymerase II-associated protein rba50 (452 aa).

3 disordered regions span residues 60–83 (LRKNKESPGLEGKGNLDDQGIDEE), 125–202 (EREL…QTKR), and 223–261 (PIKGNEEDDASEDAKHSPKKHSPALSDGTTSNDGAPLEF). Positions 125 to 135 (ERELAQRKDRS) are enriched in basic and acidic residues. Polar residues predominate over residues 136–154 (SQVNTPDLSQRPSDDSFLS). The segment covering 156–165 (EKLRSSEKLN) has biased composition (basic and acidic residues). A compositionally biased stretch (low complexity) spans 170–191 (SVLSSEAVDSSSGSPSPPMALS).

This sequence belongs to the RPAP1 family. Interacts with RNA polymerase II.

Its subcellular location is the cytoplasm. The protein resides in the nucleus. In terms of biological role, forms an interface between the RNA polymerase II enzyme and chaperone/scaffolding proteins, suggesting that it is required to connect RNA polymerase II to regulators of protein complex formation. In Schizosaccharomyces pombe (strain 972 / ATCC 24843) (Fission yeast), this protein is RNA polymerase II-associated protein rba50 (rba50).